The primary structure comprises 267 residues: X-box-binding protein 1 (267 aa).

The Cytoplasmic segment spans residues 1 to 180; sequence MVVVAAAPSA…VQAQLSPPQN (180 aa). Positions 35–56 are disordered; it reads VPGPRAAGSEASGTPQARKRQR. The residue at position 61 (Ser61) is a Phosphoserine. The bZIP domain occupies 63 to 126; the sequence is EEKALRRKLK…HGLVVENQEL (64 aa). The basic motif stretch occupies residues 65–87; that stretch reads KALRRKLKNRVAAQTARDRKKAR. The segment at 69–85 is nuclear localization signal (NLS); sequence RKLKNRVAAQTARDRKK. The tract at residues 91–126 is leucine-zipper; the sequence is LEQQVVDLEEENHKLQLENQLLREKTHGLVVENQEL. Residues 181 to 198 form a helical; Signal-anchor for type II membrane protein membrane-spanning segment; it reads IFPWTLTLLPLQILSLIS. Residues 199 to 267 lie on the Lumenal side of the membrane; the sequence is FWAFWTSWTL…FVLTMYTPSL (69 aa). Residues 230–256 form a necessary for the translational pausing of its own mRNA region; that stretch reads QKDLVPYQPPFLCQWGPHQPSWKPLMN.

It belongs to the bZIP family. In terms of assembly, isoform 1 interacts with HM13. Isoform 1 interacts with RNF139; the interaction induces ubiquitination and degradation of isoform 1. Isoform 1 interacts (via luminal domain) with DERL1; the interaction obviates the need for ectodomain shedding prior HM13/SPP-mediated XBP1 isoform 1 cleavage. Isoform 1 interacts with isoform 2; the interaction sequesters isoform 2 from the nucleus and enhances isoform 2 degradation in the cytoplasm. Isoform 1 interacts with HDAC3 and AKT1; the interactions occur in endothelial cell (EC) under disturbed flow. Isoform 1 interacts with the oncoprotein FOS. Isoform 2 interacts with ATF6; the interaction occurs in a ER stress-dependent manner and is required for DNA binding to the unfolded protein response element (UPRE). Isoform 2 interacts with PIK3R1; the interaction is direct and induces translocation of XBP1 isoform 2 into the nucleus and the unfolded protein response (UPR) XBP1-dependent target genes activation in a ER stress- and/or insulin-dependent but PI3K-independent manner. Isoform 2 interacts with SIRT1. Isoform 2 interacts with PIK3R1 and PIK3R2; the interactions are direct and induce translocation of XBP1 isoform 2 into the nucleus and the unfolded protein response (UPR) XBP1-dependent target genes activation in a ER stress- and/or insulin-dependent but PI3K-independent manner. Isoform 2 interacts with FOXO1; the interaction is direct and leads to FOXO1 ubiquitination and degradation via the proteasome pathway in hepatocytes. In terms of processing, acetylated by EP300; acetylation positively regulates the transcriptional activity of XBP1 isoform 2. Isoform 2 is deacetylated by SIRT1; deacetylation negatively regulates the transcriptional activity of XBP1 isoform 2. Ubiquitinated, leading to proteasomal degradation in response to ER stress. Post-translationally, X-box-binding protein 1, cytoplasmic form and luminal form are produced by intramembrane proteolytic cleavage of ER membrane-anchored isoform 1 triggered by HM13/SPP in a DERL1-RNF139-dependent and VCP/p97-independent manner. X-box-binding protein 1, luminal form is ubiquitinated leading to proteasomal degradation. In terms of tissue distribution, isoform 1 and isoform 2 are expressed at higher level in branch curves of vessel walls and in atherosclerotic plaques relative to healthy segments of the same aortas (at protein level). Expressed in skeletal muscles, plasma cells and pancreatic beta cells. Isoform 1 and isoform 2 are expressed in gonadal adipose tissue. Isoform 1 is expressed in inguinal adipose tissue.

The protein localises to the endoplasmic reticulum. Its subcellular location is the nucleus. The protein resides in the cytoplasm. It localises to the endoplasmic reticulum membrane. It is found in the membrane. Functionally, functions as a transcription factor during endoplasmic reticulum stress by regulating the unfolded protein response (UPR). Required for cardiac myogenesis and hepatogenesis during embryonic development and the development of secretory tissues such as exocrine pancreas and salivary gland. Involved in differentiation of B lymphocytes to plasma cells and production of immunoglobulins. Modulates the cellular response to ER stress in a PIK3R-dependent manner. Binds to the cis-acting X box present in the promoter regions of major histocompatibility complex class II genes. Involved in VEGF-induced endothelial cell (EC) proliferation and retinal blood vessel formation during embryonic development but also for angiogenesis in adult tissues under ischemic conditions. Also functions as a major regulator of the UPR in obesity-induced insulin resistance and type 2 diabetes for the management of obesity and diabetes prevention. Its function is as follows. Plays a role in the unconventional cytoplasmic splicing processing of its own mRNA triggered by the endoplasmic reticulum (ER) transmembrane endoribonuclease ERN1: upon ER stress, the emerging XBP1 polypeptide chain, as part of a mRNA-ribosome-nascent chain (R-RNC) complex, cotranslationally recruits its own unprocessed mRNA through transient docking to the ER membrane and translational pausing, therefore facilitating efficient IRE1-mediated XBP1 mRNA isoform 2 production. In endothelial cells (EC), associated with KDR, promotes IRE1-mediated XBP1 mRNA isoform 2 production in a vascular endothelial growth factor (VEGF)-dependent manner, leading to EC proliferation and angiogenesis. Functions as a negative feed-back regulator of the potent transcription factor XBP1 isoform 2 protein levels through proteasome-mediated degradation, thus preventing the constitutive activation of the ER stress response signaling pathway. Inhibits the transactivation activity of XBP1 isoform 2 in myeloma cells. Acts as a weak transcriptional factor. Together with HDAC3, contributes to the activation of NFE2L2-mediated HMOX1 transcription factor gene expression in a PI(3)K/mTORC2/Akt-dependent signaling pathway leading to EC survival under disturbed flow/oxidative stress. Binds to the ER stress response element (ERSE) upon ER stress. Binds to the consensus 5'-GATGACGTG[TG]N(3)[AT]T-3' sequence related to cAMP responsive element (CRE)-like sequences. Binds the Tax-responsive element (TRE) present in the long terminal repeat (LTR) of T-cell leukemia virus type 1 (HTLV-I) and to the TPA response elements (TRE). Associates preferentially to the HDAC3 gene promoter region in a static flow-dependent manner. Binds to the CDH5/VE-cadherin gene promoter region. In terms of biological role, functions as a stress-inducible potent transcriptional activator during endoplasmic reticulum (ER) stress by inducing unfolded protein response (UPR) target genes via binding to the UPR element (UPRE). Up-regulates target genes encoding ER chaperones and ER-associated degradation (ERAD) components to enhance the capacity of productive folding and degradation mechanism, respectively, in order to maintain the homeostasis of the ER under ER stress. Plays a role in the production of immunoglobulins and interleukin-6 in the presence of stimuli required for plasma cell differentiation, and promotes as well membrane phospholipid biosynthesis necessary for ER expansion. Contributes to the VEGF-induced endothelial cell (EC) growth and proliferation in a Akt/GSK-dependent and/or -independent signaling pathway, respectively, leading to beta-catenin nuclear translocation and E2F2 gene expression. Promotes umbilical vein EC apoptosis and atherosclerotisis development in a caspase-dependent signaling pathway, and contributes to VEGF-induced EC proliferation and angiogenesis in adult tissues under ischemic conditions. Involved in the regulation of endostatin-induced autophagy in EC through BECN1 transcriptional activation. Plays a role as an oncogene by promoting tumor progression: stimulates zinc finger protein SNAI1 transcription to induce epithelial-to-mesenchymal (EMT) transition, cell migration and invasion of breast cancer cells. Involved in adipocyte differentiation by regulating lipogenic gene expression during lactation. Plays a role in the survival of both dopaminergic neurons of the substantia nigra pars compacta (SNpc), by maintaining protein homeostasis and of myeloma cells. Increases insulin sensitivity in the liver as a response to a high carbohydrate diet, resulting in improved glucose tolerance. Also improves glucose homeostasis in an ER stress- and/or insulin-independent manner through both binding and proteasome-induced degradation of the transcription factor FOXO1, hence resulting in suppression of gluconeogenic genes expression and in a reduction of blood glucose levels. Controls the induction of de novo fatty acid synthesis in hepatocytes by regulating the expression of a subset of lipogenic genes in an ER stress- and UPR-independent manner. Binds to the 5'-CCACG-3' motif in the PPARG promoter. Associates preferentially to the HDAC3 gene promoter region in a disturbed flow-dependent manner. Binds to the BECN1 gene promoter region. Binds to the CDH5/VE-cadherin gene promoter region. Binds to the ER stress response element (ERSE) upon ER stress. In Mus musculus (Mouse), this protein is X-box-binding protein 1.